The sequence spans 349 residues: Tribbles homolog 3 (349 aa).

The tract at residues 1–122 (MRATSLAASA…QHVARPTEVL (122 aa)) is interaction with DDIT3/CHOP. Residues 35-57 (VRDEPEPGPTPSLPPASDLSPAV) form a disordered region. In terms of domain architecture, Protein kinase spans 63–310 (LGPYILLERE…ALGILLHPWL (248 aa)). Positions 317–349 (VSPPRSDRREMDQVVPDGPQLEEAEEGEVGLYG) are disordered. The segment covering 336 to 349 (QLEEAEEGEVGLYG) has biased composition (acidic residues).

Belongs to the protein kinase superfamily. CAMK Ser/Thr protein kinase family. Tribbles subfamily. In terms of assembly, interacts with AKT1, AKT2, MAP2K1 and MAP2K7. Interacts with ATF4. Interacts with DDIT3/CHOP and inhibits its interaction with EP300/P300. Interacts with APOBEC3C. Interacts (via N-terminus) with APOBEC3A. Interacts with RELA. In terms of tissue distribution, detected only in the lung. Not detected in the heart, brain, spleen, liver, skeletal muscle, kidney and testis.

Its subcellular location is the nucleus. In terms of biological role, inactive protein kinase which acts as a regulator of the integrated stress response (ISR), a process for adaptation to various stress. Inhibits the transcriptional activity of DDIT3/CHOP and is involved in DDIT3/CHOP-dependent cell death during ER stress. May play a role in programmed neuronal cell death but does not appear to affect non-neuronal cells. Acts as a negative feedback regulator of the ATF4-dependent transcription during the ISR: while TRIB3 expression is promoted by ATF4, TRIB3 protein interacts with ATF4 and inhibits ATF4 transcription activity. Disrupts insulin signaling by binding directly to Akt kinases and blocking their activation. May bind directly to and mask the 'Thr-308' phosphorylation site in AKT1. Interacts with the NF-kappa-B transactivator p65 RELA and inhibits its phosphorylation and thus its transcriptional activation activity. Interacts with MAPK kinases and regulates activation of MAP kinases. Can inhibit APOBEC3A editing of nuclear DNA. In Rattus norvegicus (Rat), this protein is Tribbles homolog 3 (Trib3).